The following is a 436-amino-acid chain: Probable D-serine dehydratase (436 aa).

K111 carries the post-translational modification N6-(pyridoxal phosphate)lysine.

The protein belongs to the serine/threonine dehydratase family. DsdA subfamily. The cofactor is pyridoxal 5'-phosphate.

The enzyme catalyses D-serine = pyruvate + NH4(+). In Lactiplantibacillus plantarum (strain ATCC BAA-793 / NCIMB 8826 / WCFS1) (Lactobacillus plantarum), this protein is Probable D-serine dehydratase.